Here is a 159-residue protein sequence, read N- to C-terminus: RNA pyrophosphohydrolase (159 aa).

Residues 6 to 149 (GFRPNVGIIL…KREVYRRALK (144 aa)) form the Nudix hydrolase domain. The Nudix box signature appears at 38 to 59 (GGINPDETPEDALYRELNEEVG).

Belongs to the Nudix hydrolase family. RppH subfamily. Requires a divalent metal cation as cofactor.

Accelerates the degradation of transcripts by removing pyrophosphate from the 5'-end of triphosphorylated RNA, leading to a more labile monophosphorylated state that can stimulate subsequent ribonuclease cleavage. The polypeptide is RNA pyrophosphohydrolase (Pseudomonas fluorescens (strain ATCC BAA-477 / NRRL B-23932 / Pf-5)).